Here is a 974-residue protein sequence, read N- to C-terminus: RING finger protein nhl-1 (974 aa).

The disordered stretch occupies residues 1-29; the sequence is MSSSPQNEAEAREKMRELMSRPPSSRPAD. Positions 9–19 are enriched in basic and acidic residues; that stretch reads AEAREKMRELM. The segment at 43–84 adopts an RING-type zinc-finger fold; it reads CPICLDRYKQPKLLPCQHTFCYPCLESCADTLHRNLKCPECR. 2 disordered regions span residues 360-395 and 416-548; these read VKSDERASMRDREADRTSSRHSHRNPEPDESSIRYR and SLLT…DFPV. Polar residues predominate over residues 416–431; sequence SLLTTSVTADSSSRTS. Basic and acidic residues predominate over residues 437 to 446; the sequence is RVTRSVEPTK. A compositionally biased stretch (polar residues) spans 447-465; sequence SRPTSLIVPNTETPRTVSP. Residues 488 to 501 show a composition bias toward pro residues; the sequence is APLPQLPIRKPPLP. Positions 511–528 are enriched in basic and acidic residues; that stretch reads LNEKVETIRRAHQQRQDA. A compositionally biased stretch (low complexity) spans 529–538; sequence SRAASRAVSS. 6 NHL repeats span residues 699–742, 746–788, 792–835, 839–883, 887–930, and 934–974; these read RAVF…FDKD, VRQF…FGLE, LFSF…FDKN, IAKF…FDPH, LFSF…FDAQ, and VSSF…IQIF.

As to quaternary structure, interacts with ubc-13.

The polypeptide is RING finger protein nhl-1 (Caenorhabditis elegans).